We begin with the raw amino-acid sequence, 427 residues long: Adenylosuccinate synthetase (427 aa).

GTP-binding positions include 11 to 17 (GDEGKGK) and 39 to 41 (GHT). The Proton acceptor role is filled by Asp12. Asp12 and Gly39 together coordinate Mg(2+). IMP-binding positions include 12-15 (DEGK), 37-40 (NAGH), Thr132, Arg146, Gln223, Thr238, and Arg302. Catalysis depends on His40, which acts as the Proton donor. 298 to 304 (TTTGRPR) lines the substrate pocket. GTP is bound by residues Arg304, 330 to 332 (KLD), and 412 to 414 (GVG).

It belongs to the adenylosuccinate synthetase family. Homodimer. It depends on Mg(2+) as a cofactor.

It localises to the cytoplasm. It catalyses the reaction IMP + L-aspartate + GTP = N(6)-(1,2-dicarboxyethyl)-AMP + GDP + phosphate + 2 H(+). Its pathway is purine metabolism; AMP biosynthesis via de novo pathway; AMP from IMP: step 1/2. In terms of biological role, plays an important role in the de novo pathway and in the salvage pathway of purine nucleotide biosynthesis. Catalyzes the first committed step in the biosynthesis of AMP from IMP. This Dictyostelium discoideum (Social amoeba) protein is Adenylosuccinate synthetase (purA).